Here is a 293-residue protein sequence, read N- to C-terminus: Cytidine deaminase (293 aa).

CMP/dCMP-type deaminase domains follow at residues 47–166 (EDRA…FGPA) and 186–293 (ESED…YQAV). 88-90 (NME) serves as a coordination point for substrate. His-101 provides a ligand contact to Zn(2+). Glu-103 (proton donor) is an active-site residue. Zn(2+)-binding residues include Cys-128 and Cys-131.

The protein belongs to the cytidine and deoxycytidylate deaminase family. As to quaternary structure, homodimer. Zn(2+) is required as a cofactor.

The enzyme catalyses cytidine + H2O + H(+) = uridine + NH4(+). The catalysed reaction is 2'-deoxycytidine + H2O + H(+) = 2'-deoxyuridine + NH4(+). This enzyme scavenges exogenous and endogenous cytidine and 2'-deoxycytidine for UMP synthesis. The sequence is that of Cytidine deaminase from Aeromonas salmonicida (strain A449).